A 253-amino-acid chain; its full sequence is Ribosome-inactivating protein saporin-9 (253 aa).

Glu-176 is a catalytic residue.

The catalysed reaction is Endohydrolysis of the N-glycosidic bond at one specific adenosine on the 28S rRNA.. Its function is as follows. Ribosome-inactivating protein of type 1, inhibits protein synthesis in animal cells. The protein is Ribosome-inactivating protein saporin-9 (SAP9) of Saponaria officinalis (Common soapwort).